A 798-amino-acid polypeptide reads, in one-letter code: ATP-dependent RNA helicase bel (798 aa).

Residues 16–248 form a disordered region; sequence VAGLDLNGGS…SRWKEGGGSN (233 aa). Positions 31–42 are enriched in polar residues; that stretch reads PITSKTSTNSVT. Gly residues-rich tracts occupy residues 94–110, 118–132, and 154–178; these read RGGGGEYRRGGGGGGRG, YGYGSGGGGRRGGGG, and SGGGGGGGRGFGRGPSYRGGGGGSG. Phosphoserine occurs at positions 177 and 179. Over residues 198 to 209 the composition is skewed to basic and acidic residues; sequence RNDRWQEPERPA. Phosphoserine occurs at positions 214 and 219. Positions 295–323 match the Q motif motif; that stretch reads TSFDDVQLTEIIRNNVALARYDKPTPVQK. Residues 315 to 322 and 339 to 346 each bind ATP; these read YDKPTPVQ and AQTGSGKT. The 190-residue stretch at 326–515 folds into the Helicase ATP-binding domain; it reads IPIIINGRDL…SDFLSNYIFL (190 aa). Residues 459–462 carry the DEAD box motif; it reads DEAD. A Helicase C-terminal domain is found at 542 to 693; it reads YLLDLLSSIR…EIPSFMEDMS (152 aa). The residue at position 638 (serine 638) is a Phosphoserine. Disordered regions lie at residues 689 to 765 and 778 to 798; these read MEDM…SGGG and GGSYGGGSASHSSNAPDWWAQ. 2 stretches are compositionally biased toward gly residues: residues 706-717 and 740-750; these read RGGGGRYGGGFG and GGSGSGGGGGS.

Belongs to the DEAD box helicase family. DDX3/DED1 subfamily. Vas and bel colocalize in nuage (perinuclear, electron-dense granules in germline cells) and at the oocyte posterior during oogenesis.

It localises to the cytoplasm. It catalyses the reaction ATP + H2O = ADP + phosphate + H(+). Functionally, ATP-dependent RNA helicase that is essential and required for cellular function, larval growth, and for male and female fertility. Also required for RNA interference (RNAi), double-stranded RNA induces potent and specific gene silencing, by acting downstream of dsRNA internalization. RNAi is mediated by the RNA-induced silencing complex (RISC), a sequence-specific, multicomponent nuclease that destroys or silences messenger RNAs homologous to the silencing trigger. The sequence is that of ATP-dependent RNA helicase bel from Drosophila melanogaster (Fruit fly).